We begin with the raw amino-acid sequence, 87 residues long: Small ribosomal subunit protein bS20 (87 aa).

The tract at residues 1–20 (MANHKSAEKRARQTIKKTER) is disordered.

It belongs to the bacterial ribosomal protein bS20 family.

Binds directly to 16S ribosomal RNA. This Campylobacter jejuni subsp. jejuni serotype O:2 (strain ATCC 700819 / NCTC 11168) protein is Small ribosomal subunit protein bS20.